Reading from the N-terminus, the 411-residue chain is Anaerobic nitric oxide reductase flavorubredoxin homolog (411 aa).

The segment at 30 to 210 (LRGSSYNSYL…PFSRLVTPKI (181 aa)) is zinc metallo-hydrolase. His-79, Glu-81, Asp-83, His-147, Asp-166, His-227, Cys-360, Cys-363, Cys-393, and Cys-396 together coordinate Fe cation. In terms of domain architecture, Rubredoxin-like spans 355-406 (GPRMQCSVCQWIYDPAKGEPMQDVAPGTPWSEVPDNFLCPECSLGKDVFDEL).

In the N-terminal section; belongs to the zinc metallo-hydrolase group 3 family. Homotetramer. The cofactor is Fe cation.

Its subcellular location is the cytoplasm. Its pathway is nitrogen metabolism; nitric oxide reduction. In terms of biological role, anaerobic nitric oxide reductase; uses NADH to detoxify nitric oxide (NO), protecting several 4Fe-4S NO-sensitive enzymes. Has at least 2 reductase partners, only one of which (NorW, flavorubredoxin reductase) has been identified. NO probably binds to the di-iron center. Also able to function as an aerobic oxygen reductase. The polypeptide is Anaerobic nitric oxide reductase flavorubredoxin homolog (Escherichia coli O157:H7).